A 328-amino-acid chain; its full sequence is Arylacetonitrilase (328 aa).

Residues 5-278 form the CN hydrolase domain; that stretch reads VRVAVTQAEP…EGIIYADLDF (274 aa). Residue E45 is the Proton acceptor of the active site. Residue K125 is part of the active site. The active-site Nucleophile is the C160.

The protein belongs to the carbon-nitrogen hydrolase superfamily. Nitrilase family.

It catalyses the reaction a nitrile + 2 H2O = a carboxylate + NH4(+). It carries out the reaction 4-chlorophenylacetonitrile + 2 H2O = 4-chlorophenylacetate + NH4(+). Functionally, nitrilase that hydrolyzes preferentially phenylacetonitrile, (R,S)-mandelonitrile, and 3-indolylacetonitrile. This is Arylacetonitrilase from Aspergillus niger (strain ATCC MYA-4892 / CBS 513.88 / FGSC A1513).